A 390-amino-acid polypeptide reads, in one-letter code: Fer-related kinase 1 (390 aa).

The SH2 domain maps to 23–119 (YYHGMVPRQD…ASGAKIRRPM (97 aa)). The region spanning 131–386 (IVANKKLGEG…SIHKKLREFY (256 aa)) is the Protein kinase domain. ATP is bound by residues 137 to 145 (LGEGAFGDV) and K161. D252 functions as the Proton acceptor in the catalytic mechanism.

The protein belongs to the protein kinase superfamily. Tyr protein kinase family. Fes/fps subfamily. In terms of assembly, interacts with hmp-2. Mn(2+) serves as cofactor.

It localises to the nucleus. It is found in the cytoplasm. The protein localises to the cell junction. The protein resides in the cell membrane. It carries out the reaction L-tyrosyl-[protein] + ATP = O-phospho-L-tyrosyl-[protein] + ADP + H(+). In terms of biological role, non-receptor tyrosine-protein kinase which plays a role in morphogenesis by regulating the epidermal enclosure of the embryo, independently of its kinase activity. Prevents hyperactivation of the Wnt signaling pathway during endoderm development, probably by preventing hmp-2 nuclear translocation. In Caenorhabditis elegans, this protein is Fer-related kinase 1.